Reading from the N-terminus, the 498-residue chain is Neoxanthin synthase, chloroplastic (498 aa).

The N-terminal 42 residues, 1–42, are a transit peptide targeting the chloroplast; it reads METLLKPFPSLLLSSPTPYRSIVQQNPSFLSPTTKKKSRKCL.

It belongs to the lycopene cyclase family. Expressed exclusively in chromoplast-containing tissues of flowers and fruits. Expressed in preanthesis flowers.

The protein localises to the plastid. It localises to the chloroplast. The enzyme catalyses all-trans-violaxanthin = all-trans-neoxanthin. It catalyses the reaction a carotenoid psi-end group = a carotenoid beta-end derivative. It participates in carotenoid biosynthesis; neoxanthin biosynthesis. Its pathway is carotenoid biosynthesis; beta-carotene biosynthesis. Functionally, involved in the synthesis of neoxanthin, the last product of carotenoid synthesis and a precursor of abscisic acid. Involved in the beta-carotene biosynthesis. The sequence is that of Neoxanthin synthase, chloroplastic from Solanum lycopersicum (Tomato).